The chain runs to 172 residues: NADH-ubiquinone oxidoreductase chain 6 (172 aa).

5 helical membrane passes run 1-21 (MTYF…AVAS), 27-47 (YGVV…LSLG), 48-68 (ISFV…VVFV), 87-107 (VVGY…VGGF), and 138-158 (CGVG…FVVL).

It belongs to the complex I subunit 6 family.

It is found in the mitochondrion membrane. The catalysed reaction is a ubiquinone + NADH + 5 H(+)(in) = a ubiquinol + NAD(+) + 4 H(+)(out). Functionally, core subunit of the mitochondrial membrane respiratory chain NADH dehydrogenase (Complex I) that is believed to belong to the minimal assembly required for catalysis. Complex I functions in the transfer of electrons from NADH to the respiratory chain. The immediate electron acceptor for the enzyme is believed to be ubiquinone. The sequence is that of NADH-ubiquinone oxidoreductase chain 6 (MT-ND6) from Uria aalge (Common mure).